The chain runs to 154 residues: UPF0225 protein Asuc_0343 (154 aa).

Belongs to the UPF0225 family.

The chain is UPF0225 protein Asuc_0343 from Actinobacillus succinogenes (strain ATCC 55618 / DSM 22257 / CCUG 43843 / 130Z).